Reading from the N-terminus, the 94-residue chain is Pyrimidine/purine nucleoside phosphorylase (94 aa).

Belongs to the nucleoside phosphorylase PpnP family.

The catalysed reaction is a purine D-ribonucleoside + phosphate = a purine nucleobase + alpha-D-ribose 1-phosphate. It carries out the reaction adenosine + phosphate = alpha-D-ribose 1-phosphate + adenine. The enzyme catalyses cytidine + phosphate = cytosine + alpha-D-ribose 1-phosphate. It catalyses the reaction guanosine + phosphate = alpha-D-ribose 1-phosphate + guanine. The catalysed reaction is inosine + phosphate = alpha-D-ribose 1-phosphate + hypoxanthine. It carries out the reaction thymidine + phosphate = 2-deoxy-alpha-D-ribose 1-phosphate + thymine. The enzyme catalyses uridine + phosphate = alpha-D-ribose 1-phosphate + uracil. It catalyses the reaction xanthosine + phosphate = alpha-D-ribose 1-phosphate + xanthine. Its function is as follows. Catalyzes the phosphorolysis of diverse nucleosides, yielding D-ribose 1-phosphate and the respective free bases. Can use uridine, adenosine, guanosine, cytidine, thymidine, inosine and xanthosine as substrates. Also catalyzes the reverse reactions. The polypeptide is Pyrimidine/purine nucleoside phosphorylase (Shigella dysenteriae serotype 1 (strain Sd197)).